The following is a 171-amino-acid chain: Secreted LysM effector Blys4 (171 aa).

The 45-residue stretch at 125-169 folds into the LysM domain; it reads KPYTIHQGDTCWDIAESHSVGVDDILTLNPELDCDKLSIGSQICL.

This sequence belongs to the secreted LysM effector family.

Its function is as follows. Might have a role in sequestration of chitin oligosaccharides (breakdown products of fungal cell walls that are released during invasion and act as triggers of host immunity) to dampen host defense. The sequence is that of Secreted LysM effector Blys4 from Beauveria bassiana (strain ARSEF 2860) (White muscardine disease fungus).